A 444-amino-acid chain; its full sequence is Orexin receptor type 2 (444 aa).

Residues 1-10 (MSGTKLEDSP) are compositionally biased toward basic and acidic residues. A disordered region spans residues 1 to 30 (MSGTKLEDSPPCRNWSSAPELNETQEPFLN). Residues 1-54 (MSGTKLEDSPPCRNWSSAPELNETQEPFLNPTDYDDEEFLRYLWREYLHPKEYE) are Extracellular-facing. N-linked (GlcNAc...) asparagine glycosylation is found at Asn-14 and Asn-22. The segment covering 14–27 (NWSSAPELNETQEP) has biased composition (polar residues). The segment at 33 to 49 (DYDDEEFLRYLWREYLH) is required for response to orexin-A. Residues 55-75 (WVLIAGYIIVFVVALIGNVLV) traverse the membrane as a helical segment. The Cytoplasmic segment spans residues 76–88 (CVAVWKNHHMRTV). A helical transmembrane segment spans residues 89 to 110 (TNYFIVNLSLADVLVTITCLPA). Residues 111–127 (TLVVDITETWFFGQSLC) are Extracellular-facing. A disulfide bond links Cys-127 and Cys-210. Residues 128–150 (KVIPYLQTVSVSVSVLTLSCIAL) traverse the membrane as a helical segment. Residues 151 to 170 (DRWYAICHPLMFKSTAKRAR) lie on the Cytoplasmic side of the membrane. The chain crosses the membrane as a helical span at residues 171–191 (NSIVIIWIVSCIIMIPQAIVM). Residues 192–222 (ECSTMLPGLANKTTLFTVCDERWGGEIYPKM) are Extracellular-facing. N-linked (GlcNAc...) asparagine glycosylation occurs at Asn-202. Residues 223 to 243 (YHICFFLVTYMAPLCLMVLAY) form a helical membrane-spanning segment. The Cytoplasmic segment spans residues 244–304 (LQIFRKLWCR…QIRARRKTAR (61 aa)). The helical transmembrane segment at 305 to 326 (MLMVVLLVFAICYLPISILNVL) threads the bilayer. At 327–342 (KRVFGMFTHTEDRETV) the chain is on the extracellular side. A helical transmembrane segment spans residues 343–366 (YAWFTFSHWLVYANSAANPIIYNF). Residues 367–444 (LSGKFREEFK…ANGAGQLQNW (78 aa)) are Cytoplasmic-facing.

It belongs to the G-protein coupled receptor 1 family.

It is found in the cell membrane. Nonselective, high-affinity receptor for both orexin-A and orexin-B neuropeptides. Triggers an increase in cytoplasmic Ca(2+) levels in response to orexin-A binding. The polypeptide is Orexin receptor type 2 (HCRTR2) (Sus scrofa (Pig)).